Here is a 219-residue protein sequence, read N- to C-terminus: Orotate phosphoribosyltransferase (219 aa).

5-phospho-alpha-D-ribose 1-diphosphate is bound at residue Lys26. 34-35 (FF) serves as a coordination point for orotate. 5-phospho-alpha-D-ribose 1-diphosphate is bound by residues 72 to 73 (YK), Arg98, Lys99, Lys102, His104, and 124 to 132 (DDVITAGTA). Residues Thr128 and Arg156 each coordinate orotate.

The protein belongs to the purine/pyrimidine phosphoribosyltransferase family. PyrE subfamily. Homodimer. The cofactor is Mg(2+).

It carries out the reaction orotidine 5'-phosphate + diphosphate = orotate + 5-phospho-alpha-D-ribose 1-diphosphate. Its pathway is pyrimidine metabolism; UMP biosynthesis via de novo pathway; UMP from orotate: step 1/2. Functionally, catalyzes the transfer of a ribosyl phosphate group from 5-phosphoribose 1-diphosphate to orotate, leading to the formation of orotidine monophosphate (OMP). This is Orotate phosphoribosyltransferase from Xanthomonas euvesicatoria pv. vesicatoria (strain 85-10) (Xanthomonas campestris pv. vesicatoria).